Here is a 1412-residue protein sequence, read N- to C-terminus: DNA-directed RNA polymerase subunit beta' (1412 aa).

Asp-543, Asp-545, and Asp-547 together coordinate Mg(2+). Positions 1017, 1092, 1099, and 1102 each coordinate Zn(2+).

The protein belongs to the RNA polymerase beta' chain family. As to quaternary structure, the RNAP catalytic core consists of 2 alpha, 1 beta, 1 beta' and 1 omega subunit. When a sigma factor is associated with the core the holoenzyme is formed, which can initiate transcription. Requires Mg(2+) as cofactor. Zn(2+) serves as cofactor.

The catalysed reaction is RNA(n) + a ribonucleoside 5'-triphosphate = RNA(n+1) + diphosphate. Functionally, DNA-dependent RNA polymerase catalyzes the transcription of DNA into RNA using the four ribonucleoside triphosphates as substrates. This chain is DNA-directed RNA polymerase subunit beta', found in Mesomycoplasma hyopneumoniae (strain 7448) (Mycoplasma hyopneumoniae).